The primary structure comprises 295 residues: Bifunctional protein FolD (295 aa).

Residues 166–168 (GRS), S195, and I236 contribute to the NADP(+) site.

The protein belongs to the tetrahydrofolate dehydrogenase/cyclohydrolase family. In terms of assembly, homodimer.

The enzyme catalyses (6R)-5,10-methylene-5,6,7,8-tetrahydrofolate + NADP(+) = (6R)-5,10-methenyltetrahydrofolate + NADPH. It catalyses the reaction (6R)-5,10-methenyltetrahydrofolate + H2O = (6R)-10-formyltetrahydrofolate + H(+). Its pathway is one-carbon metabolism; tetrahydrofolate interconversion. Functionally, catalyzes the oxidation of 5,10-methylenetetrahydrofolate to 5,10-methenyltetrahydrofolate and then the hydrolysis of 5,10-methenyltetrahydrofolate to 10-formyltetrahydrofolate. The protein is Bifunctional protein FolD of Prosthecochloris aestuarii (strain DSM 271 / SK 413).